The chain runs to 286 residues: General stress protein A (286 aa).

Residues 12 to 17 (CADDNY) and 111 to 112 (DC) contribute to the UDP site. Aspartate 111, aspartate 113, and histidine 247 together coordinate Mn(2+). Position 247-253 (247-253 (HFCGGEK)) interacts with UDP.

It belongs to the glycosyltransferase 8 family.

This is General stress protein A (gspA) from Bacillus subtilis (strain 168).